We begin with the raw amino-acid sequence, 362 residues long: NAD(P)H-quinone oxidoreductase subunit 1, chloroplastic (362 aa).

The next 7 helical transmembrane spans lie at L26–W48, F97–Y119, L126–G148, A163–S185, L254–G276, I296–F318, and L338–V360.

It belongs to the complex I subunit 1 family. NDH is composed of at least 16 different subunits, 5 of which are encoded in the nucleus.

It is found in the plastid. Its subcellular location is the chloroplast thylakoid membrane. The catalysed reaction is a plastoquinone + NADH + (n+1) H(+)(in) = a plastoquinol + NAD(+) + n H(+)(out). It catalyses the reaction a plastoquinone + NADPH + (n+1) H(+)(in) = a plastoquinol + NADP(+) + n H(+)(out). Its function is as follows. NDH shuttles electrons from NAD(P)H:plastoquinone, via FMN and iron-sulfur (Fe-S) centers, to quinones in the photosynthetic chain and possibly in a chloroplast respiratory chain. The immediate electron acceptor for the enzyme in this species is believed to be plastoquinone. Couples the redox reaction to proton translocation, and thus conserves the redox energy in a proton gradient. In Zea mays (Maize), this protein is NAD(P)H-quinone oxidoreductase subunit 1, chloroplastic (ndhA).